The primary structure comprises 330 residues: Anthranilate phosphoribosyltransferase (330 aa).

5-phospho-alpha-D-ribose 1-diphosphate contacts are provided by residues G79, 82-83 (GD), T87, 89-92 (NIST), 107-115 (KHGNYGVSS), and S119. An anthranilate-binding site is contributed by G79. Residue S91 participates in Mg(2+) binding. N110 is a binding site for anthranilate. R165 lines the anthranilate pocket. The Mg(2+) site is built by D223 and E224.

It belongs to the anthranilate phosphoribosyltransferase family. In terms of assembly, homodimer. Requires Mg(2+) as cofactor.

It carries out the reaction N-(5-phospho-beta-D-ribosyl)anthranilate + diphosphate = 5-phospho-alpha-D-ribose 1-diphosphate + anthranilate. Its pathway is amino-acid biosynthesis; L-tryptophan biosynthesis; L-tryptophan from chorismate: step 2/5. Its function is as follows. Catalyzes the transfer of the phosphoribosyl group of 5-phosphorylribose-1-pyrophosphate (PRPP) to anthranilate to yield N-(5'-phosphoribosyl)-anthranilate (PRA). In Flavobacterium psychrophilum (strain ATCC 49511 / DSM 21280 / CIP 103535 / JIP02/86), this protein is Anthranilate phosphoribosyltransferase.